A 419-amino-acid chain; its full sequence is DNA-directed RNA polymerase I subunit RPA49 (419 aa).

2 positions are modified to phosphoserine: Ser35 and Ser163. An N6-acetyllysine modification is found at Lys373. A disordered region spans residues 397–419; that stretch reads GTLSLPLPPAQTSDRLAKRRKIT.

Belongs to the eukaryotic RPA49/POLR1E RNA polymerase subunit family. Component of the RNA polymerase I (Pol I) complex consisting of 13 subunits: a ten-subunit catalytic core composed of POLR1A/RPA1, POLR1B/RPA2, POLR1C/RPAC1, POLR1D/RPAC2, POLR1H/RPA12, POLR2E/RPABC1, POLR2F/RPABC2, POLR2H/RPABC3, POLR2K/RPABC4 and POLR2L/RPABC5; a mobile stalk subunit POLR1F/RPA43 protruding from the core and additional subunits homologous to general transcription factors POLR1E/RPA49 and POLR1G/RPA34. Forms a heterodimer with POLR1G/RPA34. Interacts with POLR1G. Also binds UBTF/UBF. Interacts with PWP1. Post-translationally, acetylated at Lys-373 by CREBBP/CBP, leading to decreased RNA polymerase I transcription. In normal conditions, deacetylated by SIRT7, promoting the association of RNA polymerase I with the rDNA promoter region and coding region. In response to stress, SIRT7 is released from nucleoli leading to hyperacetylation of POLR1E/PAF53 and decreased association of RNA polymerase I with the rDNA promoter region.

The protein resides in the nucleus. It is found in the nucleolus. In terms of biological role, component of RNA polymerase I (Pol I), a DNA-dependent RNA polymerase which synthesizes ribosomal RNA precursors using the four ribonucleoside triphosphates as substrates. Appears to be involved in the formation of the initiation complex at the promoter by mediating the interaction between Pol I and UBTF/UBF. This Homo sapiens (Human) protein is DNA-directed RNA polymerase I subunit RPA49 (POLR1E).